A 278-amino-acid chain; its full sequence is Adenosylcobinamide-GDP ribazoletransferase (278 aa).

7 consecutive transmembrane segments (helical) span residues 35–55 (VVGI…NFIL), 62–82 (AVLP…TGAL), 116–136 (GALA…SLTI), 141–161 (AAVY…VVSC), 185–205 (LIVA…MPFI), 222–242 (LIIV…SKLI), and 257–277 (LLEI…TFFI).

The protein belongs to the CobS family. The cofactor is Mg(2+).

The protein localises to the cell inner membrane. The enzyme catalyses alpha-ribazole + adenosylcob(III)inamide-GDP = adenosylcob(III)alamin + GMP + H(+). The catalysed reaction is alpha-ribazole 5'-phosphate + adenosylcob(III)inamide-GDP = adenosylcob(III)alamin 5'-phosphate + GMP + H(+). It functions in the pathway cofactor biosynthesis; adenosylcobalamin biosynthesis; adenosylcobalamin from cob(II)yrinate a,c-diamide: step 7/7. In terms of biological role, joins adenosylcobinamide-GDP and alpha-ribazole to generate adenosylcobalamin (Ado-cobalamin). Also synthesizes adenosylcobalamin 5'-phosphate from adenosylcobinamide-GDP and alpha-ribazole 5'-phosphate. The protein is Adenosylcobinamide-GDP ribazoletransferase of Fusobacterium nucleatum subsp. nucleatum (strain ATCC 25586 / DSM 15643 / BCRC 10681 / CIP 101130 / JCM 8532 / KCTC 2640 / LMG 13131 / VPI 4355).